The following is a 475-amino-acid chain: Ribulose bisphosphate carboxylase large chain (475 aa).

Positions 1–2 (MS) are excised as a propeptide. N-acetylproline is present on proline 3. Lysine 14 bears the N6,N6,N6-trimethyllysine mark. Substrate-binding residues include asparagine 123 and threonine 173. The active-site Proton acceptor is lysine 175. Lysine 177 is a binding site for substrate. Lysine 201, aspartate 203, and glutamate 204 together coordinate Mg(2+). Lysine 201 is subject to N6-carboxylysine. Histidine 294 (proton acceptor) is an active-site residue. 3 residues coordinate substrate: arginine 295, histidine 327, and serine 379.

It belongs to the RuBisCO large chain family. Type I subfamily. In terms of assembly, heterohexadecamer of 8 large chains and 8 small chains; disulfide-linked. The disulfide link is formed within the large subunit homodimers. It depends on Mg(2+) as a cofactor. The disulfide bond which can form in the large chain dimeric partners within the hexadecamer appears to be associated with oxidative stress and protein turnover.

The protein localises to the plastid. The protein resides in the chloroplast. It catalyses the reaction 2 (2R)-3-phosphoglycerate + 2 H(+) = D-ribulose 1,5-bisphosphate + CO2 + H2O. The enzyme catalyses D-ribulose 1,5-bisphosphate + O2 = 2-phosphoglycolate + (2R)-3-phosphoglycerate + 2 H(+). In terms of biological role, ruBisCO catalyzes two reactions: the carboxylation of D-ribulose 1,5-bisphosphate, the primary event in carbon dioxide fixation, as well as the oxidative fragmentation of the pentose substrate in the photorespiration process. Both reactions occur simultaneously and in competition at the same active site. This Piper cenocladum (Ant piper) protein is Ribulose bisphosphate carboxylase large chain.